We begin with the raw amino-acid sequence, 5900 residues long: Midasin (5900 aa).

Residues 250–270 (GSSVKSKKGGEQQQEGEGEDE) form a disordered region. 6 AAA-ATPase protomer regions span residues 278 to 583 (TNTV…LRKQ), 673 to 1012 (EKIS…ALNY), 1101 to 1346 (PIIP…IAGY), 1411 to 1721 (IVWT…MDKQ), 1840 to 2089 (RGMQ…HVLT), and 2167 to 2451 (LENI…EIYM). ATP is bound by residues 302-309 (GVTGSGKT) and 689-696 (GETGTGKT). The tract at residues 796 to 826 (QTTTNNTKENNNNNNNNNNNNNNNNNNKKRT) is disordered. Residues 797 to 821 (TTTNNTKENNNNNNNNNNNNNNNNN) are compositionally biased toward low complexity. Residues 1135-1142 (GPTSSGKT), 1438-1445 (GETGCSKT), 1852-1859 (GSPGVGKT), and 2184-2191 (GPTSTSKT) each bind ATP. A linker region spans residues 2562–4965 (ESAIKSILCE…EGKGKKDVSD (2404 aa)). Positions 4932–5598 (GDDGEGGEGG…SVEEKKLTRE (667 aa)) are disordered. Over residues 4984-5008 (KDEDEDEEKEEKDEDEGFDMQDDFE) the composition is skewed to acidic residues. The span at 5009–5055 (GEMHDIKKDENKDEDKKDDPNNEKENDKEMGDLEKPEDNVVDEKLWD) shows a compositional bias: basic and acidic residues. Residues 5056–5076 (EQDVQDEEEQDEEGKGDETNS) show a composition bias toward acidic residues. A compositionally biased stretch (basic and acidic residues) spans 5079–5113 (MMAKQDGKDDNDDDKKDDDKKDDKKKKKEENGKPD). 2 stretches are compositionally biased toward acidic residues: residues 5114 to 5130 (ENEE…EDGK) and 5139 to 5156 (GASD…DDVI). Basic and acidic residues predominate over residues 5159–5173 (EQEKEENHGDPRGDD). The span at 5174–5199 (QMEIPEDLELEDPDEGKEDDEQQDGG) shows a compositional bias: acidic residues. Residues 5213-5224 (DVSKEEEKKKEL) are compositionally biased toward basic and acidic residues. Composition is skewed to acidic residues over residues 5225–5255 (DGDE…EDKE) and 5273–5286 (EGDE…EEDQ). Over residues 5297–5313 (ETPKDSEQPLGVKDKTG) the composition is skewed to basic and acidic residues. Over residues 5339–5349 (GMTQPTPSEND) the composition is skewed to polar residues. Positions 5410–5442 (SEPKEKAPKQDPNAKENENQDYEFIKDDEKLDK) are enriched in basic and acidic residues. Residues 5448–5460 (QALAAATDTQLQD) show a composition bias toward low complexity. Positions 5469–5487 (DQAEQEEDQMDIDEEDDMD) are enriched in acidic residues. Composition is skewed to basic and acidic residues over residues 5488–5536 (VDHK…KDQQ) and 5551–5570 (QFTK…KAVL). The span at 5571 to 5590 (DDGDDQEMEQDGDQDDEESV) shows a compositional bias: acidic residues. Positions 5696 to 5889 (QVLLAIDDTE…NIPSILSDTL (194 aa)) constitute a VWFA domain.

The protein belongs to the midasin family. In terms of assembly, associates with pre-60S ribosomes in the nucleoplasm.

It is found in the nucleus. Its subcellular location is the nucleolus. The protein localises to the nucleoplasm. Functionally, nuclear chaperone required for maturation and nuclear export of pre-60S ribosome subunits. Functions at successive maturation steps to remove ribosomal factors at critical transition points, first driving the exit of early pre-60S particles from the nucleolus and then driving late pre-60S particles from the nucleus. This chain is Midasin (mdn1), found in Dictyostelium discoideum (Social amoeba).